Here is a 584-residue protein sequence, read N- to C-terminus: DNA ligase (584 aa).

Glu-249 lines the ATP pocket. Catalysis depends on Lys-251, which acts as the N6-AMP-lysine intermediate. Residues Arg-256, Arg-271, Glu-301, Phe-341, Arg-416, and Lys-422 each contribute to the ATP site.

It belongs to the ATP-dependent DNA ligase family. Mg(2+) serves as cofactor.

It carries out the reaction ATP + (deoxyribonucleotide)n-3'-hydroxyl + 5'-phospho-(deoxyribonucleotide)m = (deoxyribonucleotide)n+m + AMP + diphosphate.. Its function is as follows. DNA ligase that seals nicks in double-stranded DNA during DNA replication, DNA recombination and DNA repair. In Pyrobaculum arsenaticum (strain DSM 13514 / JCM 11321 / PZ6), this protein is DNA ligase.